A 226-amino-acid polypeptide reads, in one-letter code: Large ribosomal subunit protein uL1 (226 aa).

The protein belongs to the universal ribosomal protein uL1 family. In terms of assembly, part of the 50S ribosomal subunit.

Binds directly to 23S rRNA. The L1 stalk is quite mobile in the ribosome, and is involved in E site tRNA release. In terms of biological role, protein L1 is also a translational repressor protein, it controls the translation of the L11 operon by binding to its mRNA. In Borreliella burgdorferi (strain ZS7) (Borrelia burgdorferi), this protein is Large ribosomal subunit protein uL1.